The sequence spans 615 residues: Probable transporter mch1 (615 aa).

Residues 1–35 (MTGSIGQAPAIDKRDFDINRRSSTPHETAAQEDEA) form a disordered region. Positions 11 to 20 (IDKRDFDINR) are enriched in basic and acidic residues. Residues 84-104 (FVWGVITCLGAGSITAFSLYG) traverse the membrane as a helical segment. An N-linked (GlcNAc...) asparagine glycan is attached at N112. 5 consecutive transmembrane segments (helical) span residues 120–140 (EVSI…GYLC), 147–167 (PLTL…AFVY), 182–202 (FWVM…MYLA), 218–238 (GIIL…QSQV), and 261–281 (FLFL…ALRI). A glycan (N-linked (GlcNAc...) asparagine) is linked at N329. The next 6 membrane-spanning stretches (helical) occupy residues 371 to 391 (IFLA…VTGP), 428 to 448 (IIAL…DLFA), 477 to 497 (LAFL…LASP), 512 to 532 (LVGL…SVVW), 538 to 558 (GTNW…WGVI), and 583 to 603 (FGFW…AWLV).

Belongs to the major facilitator superfamily.

The protein localises to the vacuole membrane. Probable transporter. This chain is Probable transporter mch1 (mch1), found in Emericella nidulans (strain FGSC A4 / ATCC 38163 / CBS 112.46 / NRRL 194 / M139) (Aspergillus nidulans).